Consider the following 509-residue polypeptide: Src substrate cortactin (509 aa).

The disordered stretch occupies residues 1 to 28; sequence MWKASAGHAVSITQDDGGADDWETDPDF. Over residues 17-28 the composition is skewed to acidic residues; the sequence is GGADDWETDPDF. 5 Cortactin repeats span residues 80–116, 117–153, 154–190, 191–227, and 228–264; these read ASHGYGGKFGVEQDRMDKSAVGHEYQSKLSKHCSQVD, SVRGFGGKFGVQMDRVDQSAVGFEYQGKTEKHASQKD, YSSGFGGKYGVQADRVDKSAVGFDYQGKTEKHESQKD, YSKGFGGKYGIDKDKVDKSAVGFEYQGKTEKHESQKD, and YVKGFGGKFGVQTDRQDKCALGWDHQEKLQLHESQKD. Residues lysine 87 and lysine 107 each carry the N6-acetyllysine modification. Phosphoserine is present on serine 113. The residue at position 119 (arginine 119) is an Omega-N-methylarginine. An N6-acetyllysine modification is found at lysine 124. Residue lysine 144 is modified to N6-acetyllysine; alternate. Residue lysine 144 forms a Glycyl lysine isopeptide (Lys-Gly) (interchain with G-Cter in SUMO1); alternate linkage. Lysine 144 participates in a covalent cross-link: Glycyl lysine isopeptide (Lys-Gly) (interchain with G-Cter in SUMO2); alternate. At serine 150 the chain carries Phosphoserine. Lysine 152, lysine 161, and lysine 171 each carry N6-acetyllysine. Position 181 is an N6-acetyllysine; alternate (lysine 181). A Glycyl lysine isopeptide (Lys-Gly) (interchain with G-Cter in SUMO1); alternate cross-link involves residue lysine 181. Residue lysine 181 forms a Glycyl lysine isopeptide (Lys-Gly) (interchain with G-Cter in SUMO2); alternate linkage. Lysine 193 and lysine 198 each carry N6-acetyllysine. A Glycyl lysine isopeptide (Lys-Gly) (interchain with G-Cter in SUMO1) cross-link involves residue lysine 218. Position 235 is an N6-acetyllysine (lysine 235). Residue serine 261 is modified to Phosphoserine. A Cortactin 6; truncated repeat occupies 265–287; the sequence is YAKGFGGKYGVQKDRMDKNASTF. Residues lysine 267, lysine 272, lysine 277, and lysine 309 each carry the N6-acetyllysine modification. Positions 311 to 364 form a coiled coil; it reads SNIRANFENLAKEREQEDRRKAEAERAQRMAQERQEQEEARRKLEEQARAKKQT. Residues 318-409 are disordered; sequence ENLAKEREQE…EPEPEYSTEA (92 aa). Basic and acidic residues predominate over residues 320–359; sequence LAKEREQEDRRKAEAERAQRMAQERQEQEEARRKLEEQAR. Position 364 is a phosphothreonine (threonine 364). Phosphoserine occurs at positions 368, 370, 380, and 381. The residue at position 384 (tyrosine 384) is a Phosphotyrosine; by FAK1. Low complexity predominate over residues 393-406; it reads EPSYGSSEPEPEYS. Position 405 is a phosphotyrosine (tyrosine 405). A Phosphoserine modification is found at serine 406. Phosphotyrosine; by FAK1 is present on residues tyrosine 429 and tyrosine 445. A phosphotyrosine; by SRC mark is found at tyrosine 445 and tyrosine 448. In terms of domain architecture, SH3 spans 451-509; that stretch reads DLGITAIALYDYQAAGDDEISFDPDDVITNIEMIDDGWWRGVCKGRYGLFPANYVELRQ.

In terms of assembly, part of a complex composed of NEDD9, AURKA and CTTN; within the complex NEDD9 acts as a scaffold protein and is required for complex formation. Interacts (via N-terminus) with NEDD9. Identified in a complex containing FGFR4, NCAM1, CDH2, PLCG1, FRS2, SRC, SHC1, GAP43 and CTTN. Forms a complex with ABL1 and MYLK. Interacts with SHANK2 and SHANK3 (via its SH3 domain). Interacts with PLXDC2 and SRCIN1. Interacts with SAMSN1 (via SH3 domain). Interacts (via SH3 domain) with ASAP1 (via Pro-rich region). Interacts with FER. Interacts with FGD1. Interacts with ABL2. Interacts with CTTNBP2NL; this interaction may target CTTN to stress fibers. Interacts with CTTNBP2; this interaction may target CTTN at the cell cortex or dendritic spines. Interacts (via SH3 domain) with DNM2. Interacts with ACTN1. Interacts with KCNA2 (via non-phosphorylated C-terminus). Interacts with PTK2/FAK1. Interacts with KCNH1. Interacts (via SH3 domain) with DIP2A (via N-terminus); the interaction enhances CTTN acetylation and is required for proper synaptic transmission. Interacts with XIRP1 (via N-terminus); the interaction promotes CTTN localization to intercalated disks in cardiomyocytes. In terms of processing, acetylated. Phosphorylated by FER. Phosphorylated in response to FGR activation. Phosphorylation by SRC promotes MYLK binding. Tyrosine phosphorylation in transformed cells may contribute to cellular growth regulation and transformation. Phosphorylated by PKN2 at both serine and threonine residues in a GTP-bound Rac1-dependent manner in hyaluronan-induced astrocytes and hence down-regulated CTTN ability to associate with filamentous actin. Phosphorylated on tyrosine residues in response to CHRM1 activation. Phosphorylated by PTK2/FAK1 in response to cell adhesion. As to expression, detected in liver (at protein level).

It localises to the cytoplasm. The protein localises to the cytoskeleton. Its subcellular location is the cell projection. It is found in the lamellipodium. The protein resides in the ruffle. It localises to the dendrite. The protein localises to the cell membrane. Its subcellular location is the podosome. It is found in the cell junction. The protein resides in the focal adhesion. It localises to the membrane. The protein localises to the clathrin-coated pit. Its subcellular location is the dendritic spine. It is found in the cell cortex. The protein resides in the endoplasmic reticulum. In terms of biological role, contributes to the organization of the actin cytoskeleton and cell shape. Plays a role in the formation of lamellipodia and in cell migration. Plays a role in the regulation of neuron morphology, axon growth and formation of neuronal growth cones. Through its interaction with CTTNBP2, involved in the regulation of neuronal spine density. Plays a role in focal adhesion assembly and turnover. In complex with ABL1 and MYLK regulates cortical actin-based cytoskeletal rearrangement critical to sphingosine 1-phosphate (S1P)-mediated endothelial cell (EC) barrier enhancement. Plays a role in intracellular protein transport and endocytosis, and in modulating the levels of potassium channels present at the cell membrane. Plays a role in receptor-mediated endocytosis via clathrin-coated pits. Required for stabilization of KCNH1 channels at the cell membrane. This chain is Src substrate cortactin, found in Rattus norvegicus (Rat).